A 484-amino-acid chain; its full sequence is ATP synthase subunit beta (484 aa).

Gly-169–Thr-176 contacts ATP.

This sequence belongs to the ATPase alpha/beta chains family. In terms of assembly, F-type ATPases have 2 components, CF(1) - the catalytic core - and CF(0) - the membrane proton channel. CF(1) has five subunits: alpha(3), beta(3), gamma(1), delta(1), epsilon(1). CF(0) has three main subunits: a(1), b(2) and c(9-12). The alpha and beta chains form an alternating ring which encloses part of the gamma chain. CF(1) is attached to CF(0) by a central stalk formed by the gamma and epsilon chains, while a peripheral stalk is formed by the delta and b chains.

The protein resides in the cell membrane. The enzyme catalyses ATP + H2O + 4 H(+)(in) = ADP + phosphate + 5 H(+)(out). Functionally, produces ATP from ADP in the presence of a proton gradient across the membrane. The catalytic sites are hosted primarily by the beta subunits. The sequence is that of ATP synthase subunit beta from Cutibacterium acnes (strain DSM 16379 / KPA171202) (Propionibacterium acnes).